A 493-amino-acid polypeptide reads, in one-letter code: Glutamate--tRNA ligase (493 aa).

A 'HIGH' region motif is present at residues 10–20 (PSPTGFVHIGS). 4 residues coordinate Zn(2+): Cys114, Cys116, Cys141, and Glu143. Positions 258–262 (KLSKR) match the 'KMSKS' region motif. Position 261 (Lys261) interacts with ATP.

It belongs to the class-I aminoacyl-tRNA synthetase family. Glutamate--tRNA ligase type 1 subfamily. In terms of assembly, monomer. Zn(2+) serves as cofactor.

Its subcellular location is the cytoplasm. It carries out the reaction tRNA(Glu) + L-glutamate + ATP = L-glutamyl-tRNA(Glu) + AMP + diphosphate. Catalyzes the attachment of glutamate to tRNA(Glu) in a two-step reaction: glutamate is first activated by ATP to form Glu-AMP and then transferred to the acceptor end of tRNA(Glu). In Alkaliphilus metalliredigens (strain QYMF), this protein is Glutamate--tRNA ligase.